A 73-amino-acid polypeptide reads, in one-letter code: RNA-binding protein Hfq (73 aa).

The Sm domain maps to 8 to 68 (DQFLNQIRKD…ISTFAPQKNV (61 aa)).

This sequence belongs to the Hfq family. Homohexamer.

RNA chaperone that binds small regulatory RNA (sRNAs) and mRNAs to facilitate mRNA translational regulation in response to envelope stress, environmental stress and changes in metabolite concentrations. Also binds with high specificity to tRNAs. This chain is RNA-binding protein Hfq, found in Bacillus pumilus (strain SAFR-032).